Consider the following 296-residue polypeptide: Telomere repeat-binding factor 4 (296 aa).

The HTH myb-type domain occupies 1-62 (MGNQKLKWTA…WRNLSVAPGI (62 aa)). The segment at residues 28-58 (WKNILRDPELAEQLSSRSNIDLKDKWRNLSV) is a DNA-binding region (H-T-H motif). The H15 domain maps to 126-200 (NAPRYDGMIF…STQNFYKMND (75 aa)). The tract at residues 197–232 (KMNDNSLVQRTPHVARPKESNTKSRQQTNSQGPSIS) is disordered. Positions 219 to 232 (KSRQQTNSQGPSIS) are enriched in polar residues. Positions 245-282 (KLVEVENKLDVSKGAAEEIERLMKLAEEADEMLVIARE) form a coiled coil.

It belongs to the histone H1/H5 family. SMH subfamily.

It localises to the nucleus. The protein resides in the chromosome. In terms of biological role, binds preferentially double-stranded telomeric repeats. This is Telomere repeat-binding factor 4 from Arabidopsis thaliana (Mouse-ear cress).